Here is a 562-residue protein sequence, read N- to C-terminus: Wee1-like protein kinase 2 (562 aa).

2 disordered regions span residues 1 to 86 (MRTA…DKGV) and 161 to 181 (YRQA…DDCS). The span at 35-48 (HSNQRGSPVNSWRA) shows a compositional bias: polar residues. A Protein kinase domain is found at 217-491 (FLEIEKIGAG…AKNSLLRRCV (275 aa)). ATP contacts are provided by residues 223–231 (IGAGEFGSV) and lysine 246. The Proton acceptor role is filled by aspartate 344. Mg(2+)-binding residues include asparagine 349 and aspartate 381. A coiled-coil region spans residues 494 to 520 (AAQLQKQLNVEKFKTAMLERELKAAKL).

It belongs to the protein kinase superfamily. Ser/Thr protein kinase family. WEE1 subfamily.

The protein resides in the nucleus. It carries out the reaction L-tyrosyl-[protein] + ATP = O-phospho-L-tyrosyl-[protein] + ADP + H(+). Oocyte-specific protein tyrosine kinase that phosphorylates and inhibits cdk1 and acts as a regulator of meiosis. Required to maintain meiotic arrest in oocytes by phosphorylating cdk1 at 'Tyr-15', leading to inhibit cdk1 activity and prevent meiotic reentry. This is Wee1-like protein kinase 2 (wee2) from Xenopus tropicalis (Western clawed frog).